We begin with the raw amino-acid sequence, 492 residues long: Trigger factor (492 aa).

A PPIase FKBP-type domain is found at 164 to 249 (GDLVVVDFVG…VSDVRVPRKA (86 aa)). The disordered stretch occupies residues 440-492 (EAEEDSIGKHDHDHDHKEKASDKPKAKKAAAPKKKAAPKKKAAPKAEKKSSDE). The span at 445 to 463 (SIGKHDHDHDHKEKASDKP) shows a compositional bias: basic and acidic residues. A compositionally biased stretch (basic residues) spans 464–482 (KAKKAAAPKKKAAPKKKAA). Over residues 483–492 (PKAEKKSSDE) the composition is skewed to basic and acidic residues.

This sequence belongs to the FKBP-type PPIase family. Tig subfamily.

It is found in the cytoplasm. It catalyses the reaction [protein]-peptidylproline (omega=180) = [protein]-peptidylproline (omega=0). Functionally, involved in protein export. Acts as a chaperone by maintaining the newly synthesized protein in an open conformation. Functions as a peptidyl-prolyl cis-trans isomerase. The sequence is that of Trigger factor from Zymomonas mobilis subsp. mobilis (strain ATCC 31821 / ZM4 / CP4).